The chain runs to 407 residues: Argininosuccinate synthase (407 aa).

ATP-binding positions include 13–21 (AYSGGLDTS) and alanine 40. Residues tyrosine 91 and serine 96 each contribute to the L-citrulline site. Residue glycine 121 coordinates ATP. L-aspartate is bound by residues threonine 123, asparagine 127, and aspartate 128. Asparagine 127 contributes to the L-citrulline binding site. L-citrulline-binding residues include arginine 131, serine 182, serine 191, glutamate 267, and tyrosine 279.

The protein belongs to the argininosuccinate synthase family. Type 1 subfamily. In terms of assembly, homotetramer.

Its subcellular location is the cytoplasm. It carries out the reaction L-citrulline + L-aspartate + ATP = 2-(N(omega)-L-arginino)succinate + AMP + diphosphate + H(+). It functions in the pathway amino-acid biosynthesis; L-arginine biosynthesis; L-arginine from L-ornithine and carbamoyl phosphate: step 2/3. The polypeptide is Argininosuccinate synthase (Agrobacterium fabrum (strain C58 / ATCC 33970) (Agrobacterium tumefaciens (strain C58))).